The sequence spans 93 residues: C-C motif chemokine 14 (93 aa).

The N-terminal stretch at 1–19 (MKISVAAIPFFLLITIALG) is a signal peptide. A glycan (O-linked (GalNAc...) serine; partial) is linked at Ser-26. 2 cysteine pairs are disulfide-bonded: Cys-35–Cys-59 and Cys-36–Cys-75.

Belongs to the intercrine beta (chemokine CC) family. The N-terminal processed forms HCC-1(3-74), HCC-1(4-74) and HCC-1(9-74) are produced in small amounts by proteolytic cleavage after secretion in blood. Post-translationally, HCC-1(1-74), but not HCC-1(3-74) and HCC-1(4-74), is partially O-glycosylated; the O-linked glycan consists of one Gal-GalNAc disaccharide, further modified by two N-acetylneuraminic acids. Expressed constitutively in several normal tissues: spleen, liver, skeletal and heart muscle, gut, and bone marrow, present at high concentrations (1-80 nM) in plasma.

The protein resides in the secreted. Its function is as follows. Has weak activities on human monocytes and acts via receptors that also recognize MIP-1 alpha. It induces intracellular Ca(2+) changes and enzyme release, but no chemotaxis, at concentrations of 100-1,000 nM, and is inactive on T-lymphocytes, neutrophils, and eosinophil leukocytes. Enhances the proliferation of CD34 myeloid progenitor cells. The processed form HCC-1(9-74) is a chemotactic factor that attracts monocytes, eosinophils, and T-cells and is a ligand for CCR1, CCR3 and CCR5. The chain is C-C motif chemokine 14 (CCL14) from Homo sapiens (Human).